We begin with the raw amino-acid sequence, 459 residues long: Putrescine aminotransferase (459 aa).

Residues 150–151 (GT) and Q274 each bind pyridoxal 5'-phosphate. The residue at position 300 (K300) is an N6-(pyridoxal phosphate)lysine. T332 is a binding site for pyridoxal 5'-phosphate.

It belongs to the class-III pyridoxal-phosphate-dependent aminotransferase family. Putrescine aminotransferase subfamily. Requires pyridoxal 5'-phosphate as cofactor.

It catalyses the reaction an alkane-alpha,omega-diamine + 2-oxoglutarate = an omega-aminoaldehyde + L-glutamate. The catalysed reaction is putrescine + 2-oxoglutarate = 1-pyrroline + L-glutamate + H2O. It carries out the reaction cadaverine + 2-oxoglutarate = 5-aminopentanal + L-glutamate. Its pathway is amine and polyamine degradation; putrescine degradation; 4-aminobutanal from putrescine (transaminase route): step 1/1. Catalyzes the aminotransferase reaction from putrescine to 2-oxoglutarate, leading to glutamate and 4-aminobutanal, which spontaneously cyclizes to form 1-pyrroline. This is the first step in one of two pathways for putrescine degradation, where putrescine is converted into 4-aminobutanoate (gamma-aminobutyrate or GABA) via 4-aminobutanal. Also functions as a cadaverine transaminase in a a L-lysine degradation pathway to succinate that proceeds via cadaverine, glutarate and L-2-hydroxyglutarate. The protein is Putrescine aminotransferase of Escherichia fergusonii (strain ATCC 35469 / DSM 13698 / CCUG 18766 / IAM 14443 / JCM 21226 / LMG 7866 / NBRC 102419 / NCTC 12128 / CDC 0568-73).